Consider the following 282-residue polypeptide: Undecaprenyl-diphosphatase 1 (282 aa).

The next 8 membrane-spanning stretches (helical) occupy residues 1–21, 46–66, 91–111, 117–137, 150–170, 193–213, 226–246, and 260–280; these read MLLL…VLPL, GVAL…LYFW, AFLV…LAHF, SPGL…LGVI, MGGI…LPGV, FSML…GLDL, LIAA…MMAW, and VLLG…APFL.

The protein belongs to the UppP family.

The protein resides in the cell inner membrane. It carries out the reaction di-trans,octa-cis-undecaprenyl diphosphate + H2O = di-trans,octa-cis-undecaprenyl phosphate + phosphate + H(+). Catalyzes the dephosphorylation of undecaprenyl diphosphate (UPP). Confers resistance to bacitracin. The polypeptide is Undecaprenyl-diphosphatase 1 (Rhodospirillum rubrum (strain ATCC 11170 / ATH 1.1.1 / DSM 467 / LMG 4362 / NCIMB 8255 / S1)).